The sequence spans 292 residues: 4-hydroxy-tetrahydrodipicolinate synthase (292 aa).

T45 serves as a coordination point for pyruvate. Y133 serves as the catalytic Proton donor/acceptor. Catalysis depends on K161, which acts as the Schiff-base intermediate with substrate. Position 203 (I203) interacts with pyruvate.

This sequence belongs to the DapA family. As to quaternary structure, homodimer.

It localises to the cytoplasm. It catalyses the reaction L-aspartate 4-semialdehyde + pyruvate = (2S,4S)-4-hydroxy-2,3,4,5-tetrahydrodipicolinate + H2O + H(+). The protein operates within amino-acid biosynthesis; L-lysine biosynthesis via DAP pathway; (S)-tetrahydrodipicolinate from L-aspartate: step 3/4. Catalyzes the condensation of (S)-aspartate-beta-semialdehyde [(S)-ASA] and pyruvate to 4-hydroxy-tetrahydrodipicolinate (HTPA). In Ectopseudomonas mendocina (strain ymp) (Pseudomonas mendocina), this protein is 4-hydroxy-tetrahydrodipicolinate synthase.